The chain runs to 180 residues: Stathmin-3 (180 aa).

In terms of domain architecture, SLD spans 38–180 (GDMEVKQLDK…NKEQREEISG (143 aa)). Residues 60–74 (SPSDLSPESPILSSP) are compositionally biased toward low complexity. The tract at residues 60 to 82 (SPSDLSPESPILSSPPKKKDLSL) is disordered. Residues 75–179 (PKKKDLSLEE…RNKEQREEIS (105 aa)) are a coiled coil.

It belongs to the stathmin family.

This Gallus gallus (Chicken) protein is Stathmin-3 (STMN3).